Reading from the N-terminus, the 530-residue chain is Sensor protein kinase PilS (530 aa).

6 helical membrane passes run 25–37 (LTIGLVLVLLISS), 57–70 (WCYLVFNILVALFL), 76–98 (LLPIFILALTDVLMLCGLFYAGG), 101–119 (PSGIGSLLVVAVAIANILL), 124–144 (GLVIAAAASLGLLYLTFFLSL), and 156–174 (AGGLGTLCFAAALVIQALV). Topologically, residues 175–530 (RRQEQTETLA…ITFAHPRKLS (356 aa)) are cytoplasmic. The region spanning 196–260 (ELNALILQRM…KQWRLNPSLR (65 aa)) is the PAS domain. One can recognise a Histidine kinase domain in the interval 316 to 527 (GIAHEIRNPL…CFRITFAHPR (212 aa)). His319 carries the phosphohistidine; by autocatalysis modification.

As to quaternary structure, interacts with PilA.

Its subcellular location is the cell inner membrane. It carries out the reaction ATP + protein L-histidine = ADP + protein N-phospho-L-histidine.. Its function is as follows. Member of the two-component regulatory system PilS/PilR that regulates the expression of multiple genes including the type IV pilus (T4P) major subunit PilA. Thereby, plays a major role in the regulation of multiple motility pathways. Functions as a membrane-associated protein kinase that phosphorylates PilR in response to environmental signals leading to activation of specific gene promoters including the pilin gene. The sequence is that of Sensor protein kinase PilS (pilS) from Pseudomonas aeruginosa (strain ATCC 15692 / DSM 22644 / CIP 104116 / JCM 14847 / LMG 12228 / 1C / PRS 101 / PAO1).